We begin with the raw amino-acid sequence, 274 residues long: Serine protease 28 (274 aa).

Residues 1 to 26 (MFRLLLLALSCLESTVFMASVSISRS) form the signal peptide. A Peptidase S1 domain is found at 31 to 274 (IVGGQRTPPG…SLAWIHQHIQ (244 aa)). Cysteines 62 and 78 form a disulfide. Histidine 77 serves as the catalytic Charge relay system. The N-linked (GlcNAc...) asparagine glycan is linked to asparagine 106. The Charge relay system role is filled by aspartate 124. Intrachain disulfides connect cysteine 158–cysteine 233, cysteine 191–cysteine 214, and cysteine 223–cysteine 251. The Charge relay system role is filled by serine 227.

It belongs to the peptidase S1 family. In terms of assembly, homooligomer, heterodimer and heterotetramer. Able to form homo- and hetero- tetrameric structures. Heterotetramer is far more stable than the homotetramer. Expressed in embryos throughout the preimplantation period, during blastocyst hatching and embryo outgrowth. Found in uterus especially in glandular epithelium.

The protein localises to the secreted. Inhibited by benzamidine, (4-amidino-phenyl)-methane-sulfonyl (APMSF), N-p-tosyl-L-lysine chloromethylketone (TLCK), gabexate, mesylate, BABIM and trypsin soybean inhibitor (TSI). Its function is as follows. Involved in embryo hatching and implantation. This Mus musculus (Mouse) protein is Serine protease 28 (Prss28).